A 357-amino-acid polypeptide reads, in one-letter code: Inositol-tetrakisphosphate 1-kinase 3 (357 aa).

1D-myo-inositol 1,3,4-trisphosphate-binding residues include Lys56 and Lys98. ATP contacts are provided by Arg133 and Lys183. Residues His190 and Lys222 each coordinate 1D-myo-inositol 1,3,4-trisphosphate. ATP contacts are provided by residues 211–222, Ser237, and Ser262; that span reads QEFVNHGGVLFK. Residues Asp302, Asp317, and Asn319 each coordinate Mg(2+). Position 319 (Asn319) interacts with 1D-myo-inositol 1,3,4-trisphosphate.

Belongs to the ITPK1 family. In terms of assembly, monomer. Mg(2+) serves as cofactor. In terms of tissue distribution, expressed in roots, leaves, flowers, anthers and embryos.

It catalyses the reaction 1D-myo-inositol 3,4,5,6-tetrakisphosphate + ATP = 1D-myo-inositol 1,3,4,5,6-pentakisphosphate + ADP + H(+). The catalysed reaction is 1D-myo-inositol 1,3,4-trisphosphate + ATP = 1D-myo-inositol 1,3,4,5-tetrakisphosphate + ADP + H(+). It carries out the reaction 1D-myo-inositol 1,3,4-trisphosphate + ATP = 1D-myo-inositol 1,3,4,6-tetrakisphosphate + ADP + H(+). Functionally, kinase that can phosphorylate various inositol polyphosphate such as Ins(3,4,5,6)P4 or Ins(1,3,4)P3 and participates in phytic acid biosynthesis in developing seeds. Phytic acid is the primary storage form of phosphorus in cereal grains and other plant seeds. The polypeptide is Inositol-tetrakisphosphate 1-kinase 3 (Oryza sativa subsp. japonica (Rice)).